Consider the following 113-residue polypeptide: Hydrogenase maturation factor HypA (113 aa).

Residue His-2 participates in Ni(2+) binding. Zn(2+) contacts are provided by Cys-70, Cys-73, Cys-86, and Cys-88.

The protein belongs to the HypA/HybF family.

In terms of biological role, involved in the maturation of [NiFe] hydrogenases. Required for nickel insertion into the metal center of the hydrogenase. The polypeptide is Hydrogenase maturation factor HypA (Nostoc punctiforme (strain ATCC 29133 / PCC 73102)).